A 205-amino-acid polypeptide reads, in one-letter code: Small ribosomal subunit protein uS5 (205 aa).

Positions 49-112 (LVDEVLDINM…VSAKINLVKV (64 aa)) constitute an S5 DRBM domain.

Belongs to the universal ribosomal protein uS5 family. As to quaternary structure, part of the 30S ribosomal subunit. Contacts protein S4.

With S4 and S12 plays an important role in translational accuracy. The protein is Small ribosomal subunit protein uS5 of Methanospirillum hungatei JF-1 (strain ATCC 27890 / DSM 864 / NBRC 100397 / JF-1).